The chain runs to 130 residues: ATP synthase epsilon chain (130 aa).

It belongs to the ATPase epsilon chain family. F-type ATPases have 2 components, CF(1) - the catalytic core - and CF(0) - the membrane proton channel. CF(1) has five subunits: alpha(3), beta(3), gamma(1), delta(1), epsilon(1). CF(0) has three main subunits: a, b and c.

The protein resides in the cell membrane. Produces ATP from ADP in the presence of a proton gradient across the membrane. The protein is ATP synthase epsilon chain of Nocardia farcinica (strain IFM 10152).